Here is a 243-residue protein sequence, read N- to C-terminus: DNA repair protein RecO (243 aa).

It belongs to the RecO family.

Involved in DNA repair and RecF pathway recombination. This Xylella fastidiosa (strain M23) protein is DNA repair protein RecO.